Consider the following 253-residue polypeptide: 5'-nucleotidase SurE (253 aa).

4 residues coordinate a divalent metal cation: Asp-8, Asp-9, Ser-39, and Asn-95.

This sequence belongs to the SurE nucleotidase family. It depends on a divalent metal cation as a cofactor.

Its subcellular location is the cytoplasm. It catalyses the reaction a ribonucleoside 5'-phosphate + H2O = a ribonucleoside + phosphate. In terms of biological role, nucleotidase that shows phosphatase activity on nucleoside 5'-monophosphates. The chain is 5'-nucleotidase SurE from Desulfatibacillum aliphaticivorans.